Consider the following 195-residue polypeptide: FMN-dependent NADH:quinone oxidoreductase (195 aa).

FMN contacts are provided by residues Ser10, 16-18, 91-94, and 135-138; these read SQS, MYNF, and TRGG.

It belongs to the azoreductase type 1 family. In terms of assembly, homodimer. It depends on FMN as a cofactor.

It carries out the reaction 2 a quinone + NADH + H(+) = 2 a 1,4-benzosemiquinone + NAD(+). The enzyme catalyses N,N-dimethyl-1,4-phenylenediamine + anthranilate + 2 NAD(+) = 2-(4-dimethylaminophenyl)diazenylbenzoate + 2 NADH + 2 H(+). Its function is as follows. Quinone reductase that provides resistance to thiol-specific stress caused by electrophilic quinones. In terms of biological role, also exhibits azoreductase activity. Catalyzes the reductive cleavage of the azo bond in aromatic azo compounds to the corresponding amines. This chain is FMN-dependent NADH:quinone oxidoreductase, found in Vibrio vulnificus (strain YJ016).